A 331-amino-acid chain; its full sequence is dTDP-glucose 4,6-dehydratase (331 aa).

NAD(+) is bound by residues 11 to 12 (FI), 33 to 36 (DALT), 57 to 58 (DI), 77 to 81 (FAAET), and S96. Position 81 (T81) interacts with substrate. T120 contributes to the substrate binding site. Residue D121 is the Proton donor of the active site. Residues E122 and Y147 each act as proton acceptor in the active site. An NAD(+)-binding site is contributed by 147–151 (YSSTK). Residue N176 participates in substrate binding. N177 is a binding site for NAD(+). Substrate contacts are provided by residues 186–191 (KFIPRQ), 202–204 (KLY), R211, N246, and 269–273 (DRAGH).

Belongs to the NAD(P)-dependent epimerase/dehydratase family. dTDP-glucose dehydratase subfamily. Homodimer. NAD(+) is required as a cofactor.

The catalysed reaction is dTDP-alpha-D-glucose = dTDP-4-dehydro-6-deoxy-alpha-D-glucose + H2O. It participates in carbohydrate biosynthesis; dTDP-L-rhamnose biosynthesis. Catalyzes the dehydration of dTDP-D-glucose to form dTDP-6-deoxy-D-xylo-4-hexulose via a three-step process involving oxidation, dehydration and reduction. Involved in the biosynthesis of the dTDP-L-rhamnose which is a component of the critical linker, D-N-acetylglucosamine-L-rhamnose disaccharide, which connects the galactan region of arabinogalactan to peptidoglycan via a phosphodiester linkage. The sequence is that of dTDP-glucose 4,6-dehydratase (rmlB) from Mycolicibacterium smegmatis (strain ATCC 700084 / mc(2)155) (Mycobacterium smegmatis).